We begin with the raw amino-acid sequence, 93 residues long: NADH-dependent phenylglyoxylate dehydrogenase subunit delta (93 aa).

4Fe-4S ferredoxin-type domains follow at residues methionine 39 to alanine 68 and histidine 66 to arginine 93.

In terms of assembly, dimer of heteropentamers composed of an alpha (PadG), a beta (PadI), a gamma (PadE), a delta (PadF) and an epsilon (PadH) subunit. Requires [4Fe-4S] cluster as cofactor.

The enzyme catalyses phenylglyoxylate + NAD(+) + CoA = benzoyl-CoA + CO2 + NADH. With respect to regulation, activated by magnesium ions and thiamine diphosphate. Involved in the anaerobic metabolism of phenylalanine and phenylacetate. Catalyzes the oxidative decarboxylation of phenylglyoxylate to benzoyl-CoA and CO(2). It can also react slowly with 2-oxo-3-methylbutanoate and use different electron acceptors such as benzyl viologen, methyl viologen, FAD or FMN, but NAD seems to be the physiological electron acceptor. Also catalyzes an isotope exchange between CO(2) and the carboxyl group which proves partial or complete reversibility of the oxidative decarboxylation reaction. This is NADH-dependent phenylglyoxylate dehydrogenase subunit delta (padF) from Aromatoleum evansii (Azoarcus evansii).